We begin with the raw amino-acid sequence, 296 residues long: MAKLRQCAIYGKGGIGKSTTTQNLVAALAESGKKVMIVGCDPKADSTRLILHSKAQTTVMHLAAEAGSVEDLELEDVLSVGFGGIKCVESGGPEPGVGCAGRGVITAINFLEEEGAYDEDLDFVFYDVLGDVVCGGFAMPIRENKAQEIYIVCSGEMMAMYAANNIAKGIVKYANSGGVRLAGLICNSRNTDREDELIMALAGRLGTTMIHFVPRDNAVQHAEIRRMTMVEYDPKHKQADEYRQLANKIVNNTNFVIPTPIEMEELEELLMEFGIMEAEDESIVGQTAAELAAAAA.

ATP is bound at residue 11–18; the sequence is GKGGIGKS. Cysteine 99 contacts [4Fe-4S] cluster. At arginine 102 the chain carries ADP-ribosylarginine; by dinitrogenase reductase ADP-ribosyltransferase. Residue cysteine 134 participates in [4Fe-4S] cluster binding.

Belongs to the NifH/BchL/ChlL family. In terms of assembly, homodimer. Requires [4Fe-4S] cluster as cofactor. The reversible ADP-ribosylation of Arg-102 inactivates the nitrogenase reductase and regulates nitrogenase activity.

The catalysed reaction is N2 + 8 reduced [2Fe-2S]-[ferredoxin] + 16 ATP + 16 H2O = H2 + 8 oxidized [2Fe-2S]-[ferredoxin] + 2 NH4(+) + 16 ADP + 16 phosphate + 6 H(+). In terms of biological role, the key enzymatic reactions in nitrogen fixation are catalyzed by the nitrogenase complex, which has 2 components: the iron protein and the molybdenum-iron protein. This Dechloromonas aromatica (strain RCB) protein is Nitrogenase iron protein.